A 276-amino-acid polypeptide reads, in one-letter code: 3' cyclic ADP-D-ribose synthase HopAM1 (276 aa).

Polar residues predominate over residues 20 to 38 (VEASQVKSAGTSSTTNIDS). The disordered stretch occupies residues 20-39 (VEASQVKSAGTSSTTNIDSK). The interval 165 to 214 (KNGIAHAKKMAFFITPEWLGSDFCKQEFQWLSETKNKDIKSAFVIFKDVD) is TIR domain. Residue Gln190 is part of the active site.

In terms of assembly, homodimer.

It localises to the host cytoplasm. It is found in the host cytosol. It carries out the reaction NAD(+) = 3'cADPR + nicotinamide + H(+). Its function is as follows. NAD(+) hydrolase (NADase) that cleaves NAD(+) into nicotinamide and 3' cyclic ADP-D-ribose (3'cADPR, v2-cADPR). Upon infiltration of A.thaliana with this bacteria an effector-triggered immunity-like phenotype (ETI-like, cell death with severe chlorosis) is seen, 3'cADPR levels rise while NAD(+) levels remain constant. Plant immune responses are suppressed. Triggers hypersensitive response-like cell death in Nicotiana tabacum cv. Xanthi and N.benthamiana when transiently expressed, depletes NAD(+) in N.benthamiana. Causes cell death upon induction in yeast due to NAD(+) depletion and/or 3'cADPR itself. Transgenic A.thaliana expressing HopAM1 suppresses its plant immune system upon challenge; the plants produce 3'cADPR without significantly depleting NAD(+). This is 3' cyclic ADP-D-ribose synthase HopAM1 from Pseudomonas syringae pv. tomato (strain ATCC BAA-871 / DC3000).